We begin with the raw amino-acid sequence, 433 residues long: Energy-coupling factor transporter ATP-binding protein EcfA2 (433 aa).

The 365-residue stretch at 25-389 (VRVKNLYAVY…QHIINSTSIQ (365 aa)) folds into the ABC transporter domain. 62–69 (GNSGSGKS) contacts ATP.

It belongs to the ABC transporter superfamily. Energy-coupling factor EcfA family. In terms of assembly, forms a stable energy-coupling factor (ECF) transporter complex composed of 2 membrane-embedded substrate-binding proteins (S component), 2 ATP-binding proteins (A component) and 2 transmembrane proteins (T component).

Its subcellular location is the cell membrane. Its function is as follows. ATP-binding (A) component of a common energy-coupling factor (ECF) ABC-transporter complex. Unlike classic ABC transporters this ECF transporter provides the energy necessary to transport a number of different substrates. The sequence is that of Energy-coupling factor transporter ATP-binding protein EcfA2 from Ureaplasma parvum serovar 3 (strain ATCC 700970).